Here is a 263-residue protein sequence, read N- to C-terminus: Lens fiber major intrinsic protein (263 aa).

Over 1–9 (MWELRSASF) the chain is Cytoplasmic. Residues 10-29 (WRAIFAEFFATLFYVFFGLG) traverse the membrane as a helical segment. The Extracellular segment spans residues 30 to 41 (ASLRWTPGPLHV). A helical membrane pass occupies residues 42 to 59 (LQVALAFGLALATLVQAV). The Cytoplasmic portion of the chain corresponds to 60–61 (GH). Positions 62-77 (ISGAHVNPAVTFAFLV) form an intramembrane region, discontinuously helical. Positions 68–70 (NPA) match the NPA 1 motif. The Cytoplasmic segment spans residues 78–82 (GSQMS). A helical transmembrane segment spans residues 83–106 (LLRAFCYMAAQLLGAVAGAAVLYS). Residues 107–127 (VTPPAVRGNLALNTLHPGVSV) are Extracellular-facing. Residues 128–148 (GQATTVEIFLTLQFVLCIFAT) form a helical membrane-spanning segment. Over 149–156 (YDERRNGR) the chain is Cytoplasmic. Residues 157–175 (LGSVALAVGFSLTLGHLFG) form a helical membrane-spanning segment. Residues 176–178 (MYY) are Extracellular-facing. Residues 179–193 (TGAGMNPARSFAPAI) constitute an intramembrane region (discontinuously helical). Residues 184-186 (NPA) carry the NPA 2 motif. Residues 194-200 (LTRNFTN) lie on the Extracellular side of the membrane. A helical transmembrane segment spans residues 201-222 (HWVYWVGPIIGGGLGSLLYDFL). Over 223–263 (LFPRLKSVSERLSILKGARPSDSNGQPEGTGEPVELKTQAL) the chain is Cytoplasmic. The interval 227 to 237 (LKSVSERLSIL) is interaction with CALM. S235, S243, and S245 each carry phosphoserine. A disordered region spans residues 240-263 (ARPSDSNGQPEGTGEPVELKTQAL). Deamidated asparagine is present on N246.

The protein belongs to the MIP/aquaporin (TC 1.A.8) family. Homotetramer; each monomer provides an independent water pore. Two homotetramers on opposing membranes can dimerize, forming a cell-cell junction. Interacts with CALM; the calcium-calmodulin/CALM complex interacts with the cytoplasmic domains of two aquaporins, leading to channel closure. Interacts with BFSP1 (via C-terminus); prevents calcium-dependent inhibition of the water channel activity. Subject to partial proteolytic cleavage in the eye lens core. Partial proteolysis promotes interactions between tetramers from adjoining membranes. In terms of processing, fatty acylated at Met-1 and Lys-238. The acyl modifications, in decreasing order of ion abundance, are: oleoyl (C18:1) &gt; palmitoyl (C16:0) &gt; stearoyl (C18:0) &gt; eicosenoyl (C20:1) &gt; dihomo-gamma-linolenoyl (C20:3) &gt; palmitoleoyl (C16:1) &gt; eicosadienoyl (C20:2).

The protein resides in the cell membrane. Its subcellular location is the cell junction. It catalyses the reaction H2O(in) = H2O(out). The water channel activity is inhibited by calcium through calmodulin/CALM. Functionally, aquaporins form homotetrameric transmembrane channels, with each monomer independently mediating water transport across the plasma membrane along its osmotic gradient. Specifically expressed in lens fiber cells, this aquaporin is crucial for maintaining lens water homeostasis and transparency. Beyond water permeability, it also acts as a cell-to-cell adhesion molecule, forming thin junctions between lens fiber cells that are essential for maintaining the ordered structure and transparency of the lens. In Canis lupus familiaris (Dog), this protein is Lens fiber major intrinsic protein.